Here is a 29-residue protein sequence, read N- to C-terminus: Cycloviolacin-O15 (29 aa).

The segment at residues 1 to 29 (GLVPCGETCFTGKCYTPGCSCSYPICKKN) is a cross-link (cyclopeptide (Gly-Asn)). Disulfide bonds link Cys-5-Cys-19, Cys-9-Cys-21, and Cys-14-Cys-26.

In terms of processing, this is a cyclic peptide.

Functionally, probably participates in a plant defense mechanism. Has hemolytic activity. In Viola odorata (Sweet violet), this protein is Cycloviolacin-O15.